The chain runs to 122 residues: Large ribosomal subunit protein uL14 (122 aa).

Belongs to the universal ribosomal protein uL14 family. As to quaternary structure, part of the 50S ribosomal subunit. Forms a cluster with proteins L3 and L19. In the 70S ribosome, L14 and L19 interact and together make contacts with the 16S rRNA in bridges B5 and B8.

Functionally, binds to 23S rRNA. Forms part of two intersubunit bridges in the 70S ribosome. The polypeptide is Large ribosomal subunit protein uL14 (Kocuria rhizophila (strain ATCC 9341 / DSM 348 / NBRC 103217 / DC2201)).